The primary structure comprises 472 residues: 3-isopropylmalate dehydratase large subunit (472 aa).

Residues 289 to 312 (TWGTNPAQGTGVSQVVPSPDDAKD) form a disordered region. Over residues 290-304 (WGTNPAQGTGVSQVV) the composition is skewed to polar residues. [4Fe-4S] cluster is bound by residues Cys-347, Cys-407, and Cys-410.

The protein belongs to the aconitase/IPM isomerase family. LeuC type 1 subfamily. Heterodimer of LeuC and LeuD. The cofactor is [4Fe-4S] cluster.

It carries out the reaction (2R,3S)-3-isopropylmalate = (2S)-2-isopropylmalate. It participates in amino-acid biosynthesis; L-leucine biosynthesis; L-leucine from 3-methyl-2-oxobutanoate: step 2/4. In terms of biological role, catalyzes the isomerization between 2-isopropylmalate and 3-isopropylmalate, via the formation of 2-isopropylmaleate. The chain is 3-isopropylmalate dehydratase large subunit from Halalkalibacterium halodurans (strain ATCC BAA-125 / DSM 18197 / FERM 7344 / JCM 9153 / C-125) (Bacillus halodurans).